The primary structure comprises 533 residues: Glucose-6-phosphate isomerase (533 aa).

The active-site Proton donor is Glu341. Catalysis depends on residues His372 and Lys501.

The protein belongs to the GPI family.

Its subcellular location is the cytoplasm. The enzyme catalyses alpha-D-glucose 6-phosphate = beta-D-fructose 6-phosphate. Its pathway is carbohydrate biosynthesis; gluconeogenesis. It functions in the pathway carbohydrate degradation; glycolysis; D-glyceraldehyde 3-phosphate and glycerone phosphate from D-glucose: step 2/4. Its function is as follows. Catalyzes the reversible isomerization of glucose-6-phosphate to fructose-6-phosphate. The polypeptide is Glucose-6-phosphate isomerase (Cereibacter sphaeroides (strain ATCC 17029 / ATH 2.4.9) (Rhodobacter sphaeroides)).